Reading from the N-terminus, the 402-residue chain is Phosphoglycerate kinase (402 aa).

Residues 24-26 (DFN), arginine 40, 63-66 (HFGR), arginine 122, and arginine 155 contribute to the substrate site. Residues lysine 206, glycine 297, glutamate 328, and 357-360 (GGDS) each bind ATP.

The protein belongs to the phosphoglycerate kinase family. Monomer.

It localises to the cytoplasm. The catalysed reaction is (2R)-3-phosphoglycerate + ATP = (2R)-3-phospho-glyceroyl phosphate + ADP. It participates in carbohydrate degradation; glycolysis; pyruvate from D-glyceraldehyde 3-phosphate: step 2/5. The protein is Phosphoglycerate kinase of Synechococcus sp. (strain RCC307).